A 297-amino-acid chain; its full sequence is UDP-N-acetylenolpyruvoylglucosamine reductase (297 aa).

The 165-residue stretch at 27-191 (TGGNADIFVM…LDATFSLELE (165 aa)) folds into the FAD-binding PCMH-type domain. The active site involves Arg-170. The active-site Proton donor is Ser-220. Residue Glu-290 is part of the active site.

This sequence belongs to the MurB family. FAD serves as cofactor.

It localises to the cytoplasm. It carries out the reaction UDP-N-acetyl-alpha-D-muramate + NADP(+) = UDP-N-acetyl-3-O-(1-carboxyvinyl)-alpha-D-glucosamine + NADPH + H(+). It functions in the pathway cell wall biogenesis; peptidoglycan biosynthesis. Functionally, cell wall formation. The protein is UDP-N-acetylenolpyruvoylglucosamine reductase of Listeria welshimeri serovar 6b (strain ATCC 35897 / DSM 20650 / CCUG 15529 / CIP 8149 / NCTC 11857 / SLCC 5334 / V8).